We begin with the raw amino-acid sequence, 165 residues long: Phosphopantetheine adenylyltransferase (165 aa).

Thr11 is a substrate binding site. ATP-binding positions include 11 to 12 (TF) and His19. Positions 43, 75, and 89 each coordinate substrate. ATP contacts are provided by residues 90 to 92 (GLR), Glu100, and 125 to 131 (YQFISST).

It belongs to the bacterial CoaD family. As to quaternary structure, homohexamer. Requires Mg(2+) as cofactor.

It localises to the cytoplasm. The catalysed reaction is (R)-4'-phosphopantetheine + ATP + H(+) = 3'-dephospho-CoA + diphosphate. It functions in the pathway cofactor biosynthesis; coenzyme A biosynthesis; CoA from (R)-pantothenate: step 4/5. Reversibly transfers an adenylyl group from ATP to 4'-phosphopantetheine, yielding dephospho-CoA (dPCoA) and pyrophosphate. This chain is Phosphopantetheine adenylyltransferase, found in Acidovorax ebreus (strain TPSY) (Diaphorobacter sp. (strain TPSY)).